The following is a 420-amino-acid chain: MSSNKIGNKLSLDKVDVKGKRVLIRVDYNVPLDKNNNITSTQRIDASIPTLEYCLKNGAKSIVLMSHLGRPDGLVKPEYSLKPVVKVLEDQLKRPIKFLSDCVGEQVEKECANPEEGTVILLENLRFHIEEEGSGVDAEGKKVKANPEKVKEFRESLTKLGDVYVNDAFGTAHRAHSSMVGINLPQKAAGFLMKKELEYFAKALESPSKPFLAILGGAKVSDKIKLIENLLYKVDEMIIGGGMAFTFKKFIDNKEIGSSLFEKTAEQITKDIIAKAAKNNVKLHFPVDYVIADKFDNDANIKTVTQDQGIPEGWMGLDCGPETIKENRDTISRAKTIVWNGPMGVFEKSNFEAGTKAAMDDVVNATTNGAITIIGGGDTATCAAKYNTEDKVSHVSTGGGASLELLEGKELPGVTALSDL.

Residues Val-26, Asp-27, Tyr-28, Asn-29, Gln-42, Arg-43, Ser-66, His-67, Gly-69, Arg-70, Leu-125, Arg-126, His-173, and Arg-174 each coordinate (2R)-3-phosphoglycerate. Tyr-199 bears the Phosphotyrosine mark. Ser-206 is modified (phosphoserine). Positions 209–228 (KPFLAILGGAKVSDKIKLIE) are calmodulin binding. Residue Gly-217 coordinates ADP. Gly-217 serves as a coordination point for CDP. Positions 218 and 219 each coordinate AMP. Position 218 (Ala-218) interacts with ATP. Ala-218 is a Mg(2+) binding site. A CDP-binding site is contributed by Asp-222. A Mg(2+)-binding site is contributed by Asp-222. Lys-223 is an AMP binding site. An ATP-binding site is contributed by Lys-223. Position 241 (Gly-241) interacts with ADP. A CDP-binding site is contributed by Gly-241. AMP contacts are provided by Gly-242 and Gly-316. 2 residues coordinate ATP: Gly-242 and Gly-316. Residues Gly-341 and Phe-346 each coordinate CDP. Phe-346 provides a ligand contact to ADP. Glu-347 serves as a coordination point for AMP. Residues Glu-347, Asp-378, and Thr-379 each contribute to the ATP site. Asp-378 contributes to the Mg(2+) binding site. Position 393 is a phosphoserine (Ser-393).

Belongs to the phosphoglycerate kinase family. As to quaternary structure, monomer. Interacts with calmodulin in the presence of Ca(2+). Mg(2+) serves as cofactor.

It is found in the cytoplasm. The catalysed reaction is (2R)-3-phosphoglycerate + ATP = (2R)-3-phospho-glyceroyl phosphate + ADP. It participates in carbohydrate degradation; glycolysis; pyruvate from D-glyceraldehyde 3-phosphate: step 2/5. This Dictyostelium discoideum (Social amoeba) protein is Phosphoglycerate kinase.